A 256-amino-acid polypeptide reads, in one-letter code: Isoprenyl transferase (256 aa).

Residue Asp-33 is part of the active site. Mg(2+) is bound at residue Asp-33. Residues 34 to 37, Trp-38, Arg-46, His-50, and 78 to 80 each bind substrate; these read GNGR and STE. Asn-81 acts as the Proton acceptor in catalysis. Substrate is bound by residues Trp-82, Arg-84, Arg-201, and 207–209; that span reads RIS. Glu-220 is a Mg(2+) binding site.

This sequence belongs to the UPP synthase family. Homodimer. Requires Mg(2+) as cofactor.

Functionally, catalyzes the condensation of isopentenyl diphosphate (IPP) with allylic pyrophosphates generating different type of terpenoids. The sequence is that of Isoprenyl transferase from Staphylococcus epidermidis (strain ATCC 35984 / DSM 28319 / BCRC 17069 / CCUG 31568 / BM 3577 / RP62A).